The primary structure comprises 650 residues: Putative lipase atg15 (650 aa).

Residues M1–R11 lie on the Cytoplasmic side of the membrane. The helical; Signal-anchor for type II membrane protein transmembrane segment at V12–V32 threads the bilayer. At S33 to R650 the chain is on the lumenal side. Residues N165, N200, N222, N280, and N304 are each glycosylated (N-linked (GlcNAc...) asparagine). S320 serves as the catalytic Charge relay system. An N-linked (GlcNAc...) asparagine glycan is attached at N466.

Belongs to the AB hydrolase superfamily. Lipase family. As to quaternary structure, binds to both phosphatidylinositol (PI) and phosphatidylinositol 3,5-bisphosphate (PIP2).

It localises to the endosome. The protein localises to the multivesicular body membrane. The protein resides in the prevacuolar compartment membrane. The catalysed reaction is a triacylglycerol + H2O = a diacylglycerol + a fatty acid + H(+). Lipase which is essential for lysis of subvacuolar cytoplasm to vacuole targeted bodies and intravacuolar autophagic bodies. Involved in the lysis of intravacuolar multivesicular body (MVB) vesicles. The intravacuolar membrane disintegration by atg15 is critical to life span extension. In Aspergillus fumigatus (strain ATCC MYA-4609 / CBS 101355 / FGSC A1100 / Af293) (Neosartorya fumigata), this protein is Putative lipase atg15 (atg15).